The chain runs to 212 residues: Pyridoxine/pyridoxamine 5'-phosphate oxidase 1 (212 aa).

Substrate contacts are provided by residues Arg8–Tyr11 and Lys66. Residues Arg61 to Lys66, Phe76 to Thr77, Lys83, and Gln105 contribute to the FMN site. 3 residues coordinate substrate: Tyr123, Arg127, and Ser131. Residues Gln140–Ser141 and Trp184 each bind FMN. Arg190 to His192 lines the substrate pocket. Arg194 serves as a coordination point for FMN.

It belongs to the pyridoxamine 5'-phosphate oxidase family. Homodimer. FMN is required as a cofactor.

It catalyses the reaction pyridoxamine 5'-phosphate + O2 + H2O = pyridoxal 5'-phosphate + H2O2 + NH4(+). The enzyme catalyses pyridoxine 5'-phosphate + O2 = pyridoxal 5'-phosphate + H2O2. It participates in cofactor metabolism; pyridoxal 5'-phosphate salvage; pyridoxal 5'-phosphate from pyridoxamine 5'-phosphate: step 1/1. It functions in the pathway cofactor metabolism; pyridoxal 5'-phosphate salvage; pyridoxal 5'-phosphate from pyridoxine 5'-phosphate: step 1/1. Functionally, catalyzes the oxidation of either pyridoxine 5'-phosphate (PNP) or pyridoxamine 5'-phosphate (PMP) into pyridoxal 5'-phosphate (PLP). This chain is Pyridoxine/pyridoxamine 5'-phosphate oxidase 1, found in Ralstonia nicotianae (strain ATCC BAA-1114 / GMI1000) (Ralstonia solanacearum).